The primary structure comprises 118 residues: NADPH-dependent 7-cyano-7-deazaguanine reductase (118 aa).

Cys34 (thioimide intermediate) is an active-site residue. The active-site Proton donor is the Asp41. Substrate is bound by residues 56–58 and 75–76; these read VEL and HE.

The protein belongs to the GTP cyclohydrolase I family. QueF type 1 subfamily.

The protein resides in the cytoplasm. It catalyses the reaction 7-aminomethyl-7-carbaguanine + 2 NADP(+) = 7-cyano-7-deazaguanine + 2 NADPH + 3 H(+). It functions in the pathway tRNA modification; tRNA-queuosine biosynthesis. Catalyzes the NADPH-dependent reduction of 7-cyano-7-deazaguanine (preQ0) to 7-aminomethyl-7-deazaguanine (preQ1). The chain is NADPH-dependent 7-cyano-7-deazaguanine reductase from Halorhodospira halophila (strain DSM 244 / SL1) (Ectothiorhodospira halophila (strain DSM 244 / SL1)).